Consider the following 497-residue polypeptide: Sperm motility kinase Z (497 aa).

Positions 28-275 (YTVLKTLSQH…AQDLLSHPWL (248 aa)) constitute a Protein kinase domain. ATP is bound by residues 34 to 42 (LSQHGTTEV) and Lys57. The active-site Proton acceptor is the Asp146. The UBA domain maps to 292–332 (FPDPDIMAAMKNIGFHVQDIRESLKHRKFDETMATYNLLRA). Disordered stretches follow at residues 383–410 (TEEH…GRSQ) and 439–460 (SSQA…SCPL).

This sequence belongs to the protein kinase superfamily. CAMK Ser/Thr protein kinase family. Smok subfamily.

The catalysed reaction is L-seryl-[protein] + ATP = O-phospho-L-seryl-[protein] + ADP + H(+). The enzyme catalyses L-threonyl-[protein] + ATP = O-phospho-L-threonyl-[protein] + ADP + H(+). May play a role in sperm motility, especially in the regulation of flagellar function. The polypeptide is Sperm motility kinase Z (Gm4922) (Mus musculus (Mouse)).